A 501-amino-acid polypeptide reads, in one-letter code: Lysine--tRNA ligase (501 aa).

Mg(2+)-binding residues include glutamate 402 and glutamate 409.

It belongs to the class-II aminoacyl-tRNA synthetase family. In terms of assembly, homodimer. Requires Mg(2+) as cofactor.

It localises to the cytoplasm. The catalysed reaction is tRNA(Lys) + L-lysine + ATP = L-lysyl-tRNA(Lys) + AMP + diphosphate. The sequence is that of Lysine--tRNA ligase (lysS) from Helicobacter pylori (strain ATCC 700392 / 26695) (Campylobacter pylori).